We begin with the raw amino-acid sequence, 640 residues long: Leucine-rich repeat-containing protein 4C (640 aa).

Residues 1-44 form the signal peptide; that stretch reads MLNKMTLHPQQIMIGPRFNRALFDPLLVVLLALQLLVVAGLVRA. The 32-residue stretch at 45-76 folds into the LRRNT domain; sequence QTCPSVCSCSNQFSKVICVRKNLREVPDGIST. 9 LRR repeats span residues 77-98, 101-122, 125-146, 149-170, 173-195, 198-219, 220-241, 244-265, and 268-289; these read NTRL…SFKH, HLEI…AFNG, NLNT…AFVY, KLKE…AFNR, SLRR…AFEG, NLRY…TPLI, KLDE…SFQG, HLQK…AFDN, and SLVE…LFTP. Residues 301–353 form the LRRCT domain; that stretch reads NPWNCNCDILWLSWWIKDMAPSNTACCARCNTPPNLKGRYIGELDQNYFTCYA. The Ig-like C2-type domain occupies 354 to 442; sequence PVIVEPPADL…GNTTASATLN (89 aa). Cys-375 and Cys-426 are oxidised to a cystine. A disordered region spans residues 463-483; that stretch reads EPSQDEARTTDNNVGPTPVVD. Residues 528–548 form a helical membrane-spanning segment; the sequence is IIIGCFVAITLMAAVMLVIFY. Ser-631 carries the phosphoserine modification.

In terms of assembly, interacts with NTNG1 and WHRN. In terms of tissue distribution, highly expressed in the cerebral cortex, including frontal, parietal and occipital lobes. Putamen, amygdala, hippocampus and medulla oblongata show moderate expression. Caudate nucleus and thalamus express small amounts, whereas other brain regions show very weak or no expression.

Its subcellular location is the postsynaptic cell membrane. Its function is as follows. May promote neurite outgrowth of developing thalamic neurons. The chain is Leucine-rich repeat-containing protein 4C (LRRC4C) from Homo sapiens (Human).